Here is a 317-residue protein sequence, read N- to C-terminus: uncharacterized protein (317 aa).

It to A.aeolicus AA11 and AA34.

This is an uncharacterized protein from Aquifex aeolicus (strain VF5).